Here is a 272-residue protein sequence, read N- to C-terminus: 2-dehydro-3-deoxyphosphooctonate aldolase (272 aa).

This sequence belongs to the KdsA family.

It localises to the cytoplasm. The enzyme catalyses D-arabinose 5-phosphate + phosphoenolpyruvate + H2O = 3-deoxy-alpha-D-manno-2-octulosonate-8-phosphate + phosphate. It participates in carbohydrate biosynthesis; 3-deoxy-D-manno-octulosonate biosynthesis; 3-deoxy-D-manno-octulosonate from D-ribulose 5-phosphate: step 2/3. The protein operates within bacterial outer membrane biogenesis; lipopolysaccharide biosynthesis. The chain is 2-dehydro-3-deoxyphosphooctonate aldolase from Geobacter metallireducens (strain ATCC 53774 / DSM 7210 / GS-15).